Reading from the N-terminus, the 239-residue chain is Cysteine-rich venom protein ophanin (239 aa).

An N-terminal signal peptide occupies residues 1–18 (MIAFTLLSLAAVLQQSFG). Positions 37-165 (VDLHNSLRRS…EYSYFYVCQY (129 aa)) constitute an SCP domain. 8 disulfides stabilise this stretch: Cys-74–Cys-152, Cys-91–Cys-166, Cys-147–Cys-163, Cys-185–Cys-192, Cys-188–Cys-197, Cys-201–Cys-234, Cys-210–Cys-228, and Cys-219–Cys-232. The ShKT domain maps to 201-234 (CTLYNEYTNCDSLVKQSSCQDEWIKSKCPASCFC).

In terms of tissue distribution, expressed by the venom gland.

The protein localises to the secreted. In terms of biological role, weakly blocks contraction of smooth muscle elicited by high potassium-induced depolarization, but does not block caffeine-stimulated contraction. May target voltage-gated calcium channels on smooth muscle. The chain is Cysteine-rich venom protein ophanin from Ophiophagus hannah (King cobra).